The primary structure comprises 356 residues: Uroporphyrinogen decarboxylase (356 aa).

Substrate contacts are provided by residues 27–31 (RQAGR), D77, Y154, T209, and H327.

It belongs to the uroporphyrinogen decarboxylase family. Homodimer.

The protein localises to the cytoplasm. It catalyses the reaction uroporphyrinogen III + 4 H(+) = coproporphyrinogen III + 4 CO2. The protein operates within porphyrin-containing compound metabolism; protoporphyrin-IX biosynthesis; coproporphyrinogen-III from 5-aminolevulinate: step 4/4. Functionally, catalyzes the decarboxylation of four acetate groups of uroporphyrinogen-III to yield coproporphyrinogen-III. This Hamiltonella defensa subsp. Acyrthosiphon pisum (strain 5AT) protein is Uroporphyrinogen decarboxylase.